We begin with the raw amino-acid sequence, 155 residues long: 6,7-dimethyl-8-ribityllumazine synthase (155 aa).

5-amino-6-(D-ribitylamino)uracil is bound by residues Phe-23, 57-59 (AFE), and 81-83 (AVI). (2S)-2-hydroxy-3-oxobutyl phosphate is bound at residue 86–87 (AT). His-89 acts as the Proton donor in catalysis. Phe-114 serves as a coordination point for 5-amino-6-(D-ribitylamino)uracil. Arg-128 is a (2S)-2-hydroxy-3-oxobutyl phosphate binding site.

This sequence belongs to the DMRL synthase family.

It carries out the reaction (2S)-2-hydroxy-3-oxobutyl phosphate + 5-amino-6-(D-ribitylamino)uracil = 6,7-dimethyl-8-(1-D-ribityl)lumazine + phosphate + 2 H2O + H(+). Its pathway is cofactor biosynthesis; riboflavin biosynthesis; riboflavin from 2-hydroxy-3-oxobutyl phosphate and 5-amino-6-(D-ribitylamino)uracil: step 1/2. Catalyzes the formation of 6,7-dimethyl-8-ribityllumazine by condensation of 5-amino-6-(D-ribitylamino)uracil with 3,4-dihydroxy-2-butanone 4-phosphate. This is the penultimate step in the biosynthesis of riboflavin. The sequence is that of 6,7-dimethyl-8-ribityllumazine synthase from Geotalea uraniireducens (strain Rf4) (Geobacter uraniireducens).